The following is a 335-amino-acid chain: Dolichyl-diphosphooligosaccharide--protein glycosyltransferase subunit MAGT1 (335 aa).

The N-terminal stretch at 1-29 is a signal peptide; that stretch reads MASPRWFWSVCAIAAVALLLVSKVPSASA. At 30–184 the chain is on the extracellular side; it reads QRKKEMVLSE…DVNIRVIRPP (155 aa). The 129-residue stretch at 47–175 folds into the Thioredoxin domain; sequence WANKRPVIRM…IARWIADRTD (129 aa). Residue asparagine 71 is glycosylated (N-linked (GlcNAc...) asparagine). Cysteine 87 and cysteine 90 are oxidised to a cystine. Residues 185-205 traverse the membrane as a helical segment; sequence NYAGPLMLGLLLAVIGGLVYL. The Cytoplasmic portion of the chain corresponds to 206–209; it reads RRSN. Residues 210 to 230 form a helical membrane-spanning segment; it reads MEFLFNKTGWAFAALCFVLAM. Topologically, residues 231-270 are extracellular; that stretch reads TSGQMWNHIRGPPYAHKNPHTGHVNYIHGSSQAQFVAETH. A helical transmembrane segment spans residues 271–291; it reads IVLLFNGGVTLGMVLLCEAAT. Residues 292–300 are Cytoplasmic-facing; sequence SDMDIGKRR. A helical membrane pass occupies residues 301–321; it reads MMCIAGIGLVVLFFSWMLSIF. Topologically, residues 322-335 are extracellular; sequence RSKYHGYPYSFLMS.

This sequence belongs to the OST3/OST6 family. As to quaternary structure, accessory component of the STT3B-containing form of the oligosaccharyltransferase (OST) complex. OST exists in two different complex forms which contain common core subunits RPN1, RPN2, OST48, OST4, DAD1 and TMEM258, either STT3A or STT3B as catalytic subunits, and form-specific accessory subunits. OST can form stable complexes with the Sec61 complex or with both the Sec61 and TRAP complexes. The association of TUSC3 or MAGT1 with the STT3B-containing complex seems to be mutually exclusvice. In terms of tissue distribution, expressed at high levels in kidney, colon, heart and liver. Expressed at lower levels in intestine, spleen, brain and lung.

Its subcellular location is the cell membrane. It is found in the endoplasmic reticulum. The protein localises to the endoplasmic reticulum membrane. It participates in protein modification; protein glycosylation. Functionally, accessory component of the STT3B-containing form of the N-oligosaccharyl transferase (OST) complex which catalyzes the transfer of a high mannose oligosaccharide from a lipid-linked oligosaccharide donor to an asparagine residue within an Asn-X-Ser/Thr consensus motif in nascent polypeptide chains. Involved in N-glycosylation of STT3B-dependent substrates. Specifically required for the glycosylation of a subset of acceptor sites that are near cysteine residues; in this function seems to act redundantly with TUSC3. In its oxidized form proposed to form transient mixed disulfides with a glycoprotein substrate to facilitate access of STT3B to the unmodified acceptor site. Also has oxidoreductase-independent functions in the STT3B-containing OST complex possibly involving substrate recognition. Could indirectly play a role in Mg(2+) transport in epithelial cells. This is Dolichyl-diphosphooligosaccharide--protein glycosyltransferase subunit MAGT1 from Mus musculus (Mouse).